Consider the following 117-residue polypeptide: Putative membrane protein insertion efficiency factor (117 aa).

Belongs to the UPF0161 family.

The protein localises to the cell inner membrane. In terms of biological role, could be involved in insertion of integral membrane proteins into the membrane. In Bartonella henselae (strain ATCC 49882 / DSM 28221 / CCUG 30454 / Houston 1) (Rochalimaea henselae), this protein is Putative membrane protein insertion efficiency factor.